We begin with the raw amino-acid sequence, 208 residues long: Small ribosomal subunit protein uS5 (208 aa).

Residues 1-15 show a composition bias toward polar residues; sequence MTDSNNQSPNKKTSG. The segment at 1-54 is disordered; that stretch reads MTDSNNQSPNKKTSGSSSAPPAADGRQENRRSRGEKRGGRRDRRGQERDSEWQE. Composition is skewed to basic and acidic residues over residues 25–37 and 44–54; these read GRQE…GEKR and RGQERDSEWQE. One can recognise an S5 DRBM domain in the interval 52-115; that stretch reads WQERVVQIRR…ADGKKHLVRV (64 aa).

The protein belongs to the universal ribosomal protein uS5 family. In terms of assembly, part of the 30S ribosomal subunit. Contacts proteins S4 and S8.

Functionally, with S4 and S12 plays an important role in translational accuracy. In terms of biological role, located at the back of the 30S subunit body where it stabilizes the conformation of the head with respect to the body. The sequence is that of Small ribosomal subunit protein uS5 from Prochlorococcus marinus (strain NATL2A).